A 340-amino-acid chain; its full sequence is Selenide, water dikinase (340 aa).

Residue C13 is part of the active site. ATP contacts are provided by residues K16 and 43–45; that span reads ASD. Position 46 (D46) interacts with Mg(2+). Residues D63, D86, and 133–135 each bind ATP; that span reads GHS. Residue D86 coordinates Mg(2+). Position 221 (D221) interacts with Mg(2+).

Belongs to the selenophosphate synthase 1 family. Class I subfamily. In terms of assembly, homodimer. Mg(2+) is required as a cofactor.

The catalysed reaction is hydrogenselenide + ATP + H2O = selenophosphate + AMP + phosphate + 2 H(+). Its function is as follows. Synthesizes selenophosphate from selenide and ATP. This Desulfitobacterium hafniense (strain DSM 10664 / DCB-2) protein is Selenide, water dikinase.